The sequence spans 210 residues: Germin-like protein subfamily 3 member 4 (210 aa).

The first 18 residues, 1-18 (MKFFVVIVFCAIFLSVSG), serve as a signal peptide directing secretion. Residues Cys27 and Cys44 are joined by a disulfide bond. The Cupin type-1 domain maps to 58-190 (TKLTEAGDTD…VFGIDQEHIK (133 aa)). N-linked (GlcNAc...) asparagine glycosylation occurs at Asn73. Mn(2+)-binding residues include His106, His108, Glu113, and His152.

Belongs to the germin family. In terms of assembly, oligomer (believed to be a pentamer but probably hexamer).

Its subcellular location is the secreted. The protein resides in the extracellular space. It localises to the apoplast. May play a role in plant defense. Probably has no oxalate oxidase activity even if the active site is conserved. The chain is Germin-like protein subfamily 3 member 4 from Arabidopsis thaliana (Mouse-ear cress).